A 96-amino-acid chain; its full sequence is Putative pterin-4-alpha-carbinolamine dehydratase (96 aa).

The protein belongs to the pterin-4-alpha-carbinolamine dehydratase family.

It carries out the reaction (4aS,6R)-4a-hydroxy-L-erythro-5,6,7,8-tetrahydrobiopterin = (6R)-L-erythro-6,7-dihydrobiopterin + H2O. This Prochlorococcus marinus subsp. pastoris (strain CCMP1986 / NIES-2087 / MED4) protein is Putative pterin-4-alpha-carbinolamine dehydratase.